A 610-amino-acid polypeptide reads, in one-letter code: MNSQELKKRQENIRNFSIIAHIDHGKSTLADRILEKTETVSSREMQAQLLDSMDLERERGITIKLNAIELNYKAKNGQTYIFHLIDTPGHVDFTYEVSRSLAACEGAVLVVDAAQGIEAQTLANVYLALDNDLEILPVINKIDLPAADPERVRQEIEDVIGLDASEAVLASAKSGIGIEDILEQIVEKVPAPSGDVDQPLQALIFDSVYDAYRGVILQVRVVNGMVKPGDTIQMMSNGKTFDVTEVGIFTPKAIGRNFLATGDVGYIAASIKTVADTRVGDTVTLATNPAAEPLHGYKQMNPMVFAGIYPIESNKYNDLREALEKLQLNDASLQFEPETSQALGFGFRCGFLGLLHMDVIQERLEREFNIDLIMTAPSVVYHVNTTDGDMLEVSNPSEFPDPTKVDSIEEPYVKAQIMVPQEFVGAVMELAQRKRGDFVTMDYIDDNRVNVIYHIPLAEIVFDFFDKLKSSTRGYASFDYEIAEYRRSQLVKMDILLNGDKVDALSFIVHRAFAYERGKLIVEKLKKIIPRQQFEVPIQAAIGQKIVARSDIKALRKNVLAKCYGGDVSRKRKLLEKQKAGKKRMKAIGSVEVPQEAFLSVLSMDDESKK.

Residues 11–193 form the tr-type G domain; the sequence is ENIRNFSIIA…QIVEKVPAPS (183 aa). GTP contacts are provided by residues 23–28 and 140–143; these read DHGKST and NKID.

It belongs to the TRAFAC class translation factor GTPase superfamily. Classic translation factor GTPase family. LepA subfamily.

The protein localises to the cell membrane. It catalyses the reaction GTP + H2O = GDP + phosphate + H(+). In terms of biological role, required for accurate and efficient protein synthesis under certain stress conditions. May act as a fidelity factor of the translation reaction, by catalyzing a one-codon backward translocation of tRNAs on improperly translocated ribosomes. Back-translocation proceeds from a post-translocation (POST) complex to a pre-translocation (PRE) complex, thus giving elongation factor G a second chance to translocate the tRNAs correctly. Binds to ribosomes in a GTP-dependent manner. The polypeptide is Elongation factor 4 (Streptococcus equi subsp. zooepidemicus (strain H70)).